A 104-amino-acid polypeptide reads, in one-letter code: uncharacterized protein (104 aa).

The chain crosses the membrane as a helical span at residues 72-92 (LIFSHNIVIIVSPIYMISFII).

The protein localises to the membrane. This is an uncharacterized protein from Saccharomyces cerevisiae (strain ATCC 204508 / S288c) (Baker's yeast).